A 100-amino-acid chain; its full sequence is MGDPEVLLEVYEVIRNRIEERPEGSYVAELTEDDDTKPAINKICEKIIEESGELILAAKDGDREGVVYESTDLIFHVLVLLAYLGIEIGEVFDEFERRRK.

The protein belongs to the PRA-PH family.

It is found in the cytoplasm. The catalysed reaction is 1-(5-phospho-beta-D-ribosyl)-ATP + H2O = 1-(5-phospho-beta-D-ribosyl)-5'-AMP + diphosphate + H(+). Its pathway is amino-acid biosynthesis; L-histidine biosynthesis; L-histidine from 5-phospho-alpha-D-ribose 1-diphosphate: step 2/9. The polypeptide is Phosphoribosyl-ATP pyrophosphatase (hisE) (Methanopyrus kandleri (strain AV19 / DSM 6324 / JCM 9639 / NBRC 100938)).